Reading from the N-terminus, the 480-residue chain is Glutamyl-tRNA(Gln) amidotransferase subunit A (480 aa).

Residues K74 and S149 each act as charge relay system in the active site. The Acyl-ester intermediate role is filled by S173.

Belongs to the amidase family. GatA subfamily. Heterotrimer of A, B and C subunits.

It carries out the reaction L-glutamyl-tRNA(Gln) + L-glutamine + ATP + H2O = L-glutaminyl-tRNA(Gln) + L-glutamate + ADP + phosphate + H(+). Functionally, allows the formation of correctly charged Gln-tRNA(Gln) through the transamidation of misacylated Glu-tRNA(Gln) in organisms which lack glutaminyl-tRNA synthetase. The reaction takes place in the presence of glutamine and ATP through an activated gamma-phospho-Glu-tRNA(Gln). This is Glutamyl-tRNA(Gln) amidotransferase subunit A from Vesicomyosocius okutanii subsp. Calyptogena okutanii (strain HA).